The sequence spans 329 residues: Acetyl-coenzyme A carboxylase carboxyl transferase subunit alpha (329 aa).

The region spanning 40–294 is the CoA carboxyltransferase C-terminal domain; that stretch reads QLESLAARRR…RAALERHLGE (255 aa).

It belongs to the AccA family. In terms of assembly, acetyl-CoA carboxylase is a heterohexamer composed of biotin carboxyl carrier protein (AccB), biotin carboxylase (AccC) and two subunits each of ACCase subunit alpha (AccA) and ACCase subunit beta (AccD).

Its subcellular location is the cytoplasm. It carries out the reaction N(6)-carboxybiotinyl-L-lysyl-[protein] + acetyl-CoA = N(6)-biotinyl-L-lysyl-[protein] + malonyl-CoA. The protein operates within lipid metabolism; malonyl-CoA biosynthesis; malonyl-CoA from acetyl-CoA: step 1/1. Its function is as follows. Component of the acetyl coenzyme A carboxylase (ACC) complex. First, biotin carboxylase catalyzes the carboxylation of biotin on its carrier protein (BCCP) and then the CO(2) group is transferred by the carboxyltransferase to acetyl-CoA to form malonyl-CoA. The protein is Acetyl-coenzyme A carboxylase carboxyl transferase subunit alpha of Parasynechococcus marenigrum (strain WH8102).